Here is a 566-residue protein sequence, read N- to C-terminus: APC/C activator protein CDH1 (566 aa).

Polar residues predominate over residues 1 to 18; that stretch reads MSTNLNPFMNNTPSSSPL. A disordered region spans residues 1 to 56; sequence MSTNLNPFMNNTPSSSPLKGSESKRVSKRPISSSSSASLLSSPSRRSRPSTVYGDR. Residues 29–44 show a composition bias toward low complexity; sequence RPISSSSSASLLSSPS. The short motif at 55 to 61 is the C-box element; sequence DRYIPSR. Serine 213 is modified (phosphoserine). WD repeat units lie at residues 258–298, 300–339, 342–379, 383–422, 425–467, 469–510, and 513–552; these read PSLA…VVHL, DTENEYTSLSWIGAGSHLAVGQANGLVEIYDVMKRKCIRT, GHIDRVACLSWNNHVLTSGSRDHRILHRDVRMPDPFFE, SHTQEVCGLKWNVADNKLASGGNDNVVHVYEGTSKSPILT, EHKA…KMSD, DSGS…PIAI, and GHSFRVLHLTLSNDGTTVVSGAGDETLRYWKLFDKPKAKV.

Belongs to the WD repeat CDC20/Fizzy family. As to quaternary structure, associates with the APC/C complex. Interacts with CLB2, CLB3, CDC5, HSL1, MSN5 and PSE1. Post-translationally, phosphorylated at multiple sites by CDC28, probably in its CLB5 bound form, in S, G2 and M phase of the cell cycle, thereby blocking the association of CDH1 to the APC/C and promoting nuclear export of CDH1 by MSN5. Dephosphorylated and activated by CDC14 in late anaphase, which may be necessary for PSE1-dependent nuclear localization.

The protein resides in the cytoplasm. The protein localises to the nucleus. In terms of biological role, activator protein that regulates the ubiquitin ligase activity and substrate specificity of the anaphase promoting complex/cyclosome (APC/C). During telophase and in the subsequent G1 phase of the cell cycle, recognizes and binds proteins containing a destruction box (D-box) and an additional degradation signal termed the KEN box including ASE1, CDC20, the B-type cyclins CLB2 and CLB3, the polo-like kinase CDC5 and HSL1, and recruits them in a C-box-dependent manner to the APC/C for ubiquitination and subsequent proteolysis. Required for exit from mitosis, cytokinesis and formation of prereplicative complexes in G1. Probably is the target of a BUB2-dependent spindle checkpoint pathway. The protein is APC/C activator protein CDH1 (CDH1) of Saccharomyces cerevisiae (strain ATCC 204508 / S288c) (Baker's yeast).